Reading from the N-terminus, the 802-residue chain is Pyrophosphate-energized membrane proton pump 2 (802 aa).

A run of 6 helical transmembrane segments spans residues 45-65 (VLSI…ASTS), 66-86 (PIIV…IYLT), 118-138 (YSTI…IYLF), 160-180 (VAAF…GMWV), 206-226 (AGGF…AILY), and 246-266 (LPLL…FAQL). Lysine 273 provides a ligand contact to substrate. Mg(2+) contacts are provided by aspartate 276, aspartate 280, and aspartate 306. A run of 5 helical transmembrane segments spans residues 348 to 368 (FILF…IGIL), 386 to 406 (MAVL…TFGA), 421 to 441 (WFNF…FVWI), 468 to 488 (IIAG…TISV), and 511 to 531 (GGLF…AYVL). Mg(2+) contacts are provided by aspartate 541 and asparagine 568. 4 consecutive transmembrane segments (helical) span residues 577-597 (FAIG…MDEV), 615-635 (VFVG…WACA), 686-706 (GALA…LGYY), and 716-736 (VVAS…LFLN). Residues aspartate 743 and aspartate 773 each contribute to the Mg(2+) site. Lysine 776 serves as a coordination point for substrate. A helical transmembrane segment spans residues 782–802 (SIHVLIKMLATITLVMAPVFL).

Belongs to the H(+)-translocating pyrophosphatase (TC 3.A.10) family. K(+)-insensitive subfamily. As to quaternary structure, monomer. Ubiquitous. Mostly expressed in cotyledons, roots and flowers. Especially high levels in trichomes, sepals and stamen filaments.

It localises to the golgi apparatus membrane. It carries out the reaction diphosphate + H2O + H(+)(in) = 2 phosphate + 2 H(+)(out). With respect to regulation, activated by Mg(+) but not by K(+). Inhibited by Ca(2+). Pyrophosphatase active in both inorganic pyrophosphate hydrolysis and H(+) translocation. The sequence is that of Pyrophosphate-energized membrane proton pump 2 (AVPL1) from Arabidopsis thaliana (Mouse-ear cress).